The primary structure comprises 697 residues: MAR-binding filament-like protein 1 (697 aa).

A chloroplast-targeting transit peptide spans 1-41 (MATSCFPPFSASSSSLCSSQFTPLLSCPRNTQICRKKRPVM). Residues 42–79 (ASMHSENQKESNVCNRRSILFVGFSVLPLLNLRARALE) constitute a thylakoid transit peptide. At 80-106 (GLSTDSQAQPQKEETEQTIQGSAGNPF) the chain is on the lumenal, thylakoid side. The interval 81-100 (LSTDSQAQPQKEETEQTIQG) is disordered. Residues 107–127 (VSLLNGLGVVGSGVLGSLYAL) traverse the membrane as a helical segment. At 128–697 (ARNEKAVSDA…GEKEKVNVQQ (570 aa)) the chain is on the stromal side. Residues 203–671 (LQNEKKLAED…KGEILRLRSQ (469 aa)) adopt a coiled-coil conformation. Residues 599 to 629 (TSRNSSLEDEREVHRQSVSEQKQISQEAQEN) are disordered. Basic and acidic residues predominate over residues 604–615 (SLEDEREVHRQS). Residues 616–627 (VSEQKQISQEAQ) show a composition bias toward polar residues.

As to quaternary structure, interacts with MAF1. Interacts with PTST2; the interaction is essential for the initiation of starch granules biosynthesis in leaf chloroplasts, for the correct location of the process in the stromal spaces between the thylakoid membranes, and for the association of PTST2 with the thylakoid membranes. Phosphorylated in vitro by human casein kinase II. In terms of processing, predicted to be translocated into the thylakoid by the Tat system.

The protein localises to the plastid. It localises to the chloroplast. The protein resides in the chloroplast thylakoid membrane. Its subcellular location is the chloroplast stroma. It is found in the chloroplast nucleoid. The protein localises to the nucleus. It localises to the nucleus matrix. Functionally, required for the initiation of starch granules biosynthesis in leaf chloroplasts. Anchored to the thylakoid membranes with its C-terminus facing into the stroma where it is essential for localizing PTST2 and SS4 to the stromal spaces between the thylakoid membranes in order to begin starch granule formation. Associated with leaf chloroplastic nucleoids in vivo. Binds to various chloroplastic double-stranded DNA fragments without particular sequence specificity in vitro. May function at the interface between nucleoids and thylakoids possibly by anchoring nucleoids to the thylakoid membrane system in mature chloroplasts. Binds nuclear DNA. Interacts with chromatin via matrix attachment regions (MARs). Likely to participate in nuclear architecture by connecting chromatin with the nuclear matrix and potentially with the nuclear envelope. The polypeptide is MAR-binding filament-like protein 1 (Solanum lycopersicum (Tomato)).